Reading from the N-terminus, the 342-residue chain is Ferredoxin--NADP reductase (342 aa).

FAD contacts are provided by C17, D36, Q44, Y49, V89, F124, D289, and T330.

This sequence belongs to the ferredoxin--NADP reductase type 2 family. As to quaternary structure, homodimer. It depends on FAD as a cofactor.

It catalyses the reaction 2 reduced [2Fe-2S]-[ferredoxin] + NADP(+) + H(+) = 2 oxidized [2Fe-2S]-[ferredoxin] + NADPH. This chain is Ferredoxin--NADP reductase, found in Bradyrhizobium sp. (strain ORS 278).